We begin with the raw amino-acid sequence, 265 residues long: Hydroxyethylthiazole kinase (265 aa).

Residue Met50 coordinates substrate. Residues Arg125 and Thr171 each coordinate ATP. A substrate-binding site is contributed by Gly198.

This sequence belongs to the Thz kinase family. Requires Mg(2+) as cofactor.

It catalyses the reaction 5-(2-hydroxyethyl)-4-methylthiazole + ATP = 4-methyl-5-(2-phosphooxyethyl)-thiazole + ADP + H(+). The protein operates within cofactor biosynthesis; thiamine diphosphate biosynthesis; 4-methyl-5-(2-phosphoethyl)-thiazole from 5-(2-hydroxyethyl)-4-methylthiazole: step 1/1. Functionally, catalyzes the phosphorylation of the hydroxyl group of 4-methyl-5-beta-hydroxyethylthiazole (THZ). The polypeptide is Hydroxyethylthiazole kinase (Salmonella agona (strain SL483)).